Consider the following 189-residue polypeptide: Pyridoxal 5'-phosphate synthase subunit PdxT (189 aa).

Residue 47 to 49 coordinates L-glutamine; sequence GES. Catalysis depends on cysteine 79, which acts as the Nucleophile. L-glutamine contacts are provided by residues arginine 105 and 132–133; that span reads IR. Catalysis depends on charge relay system residues histidine 168 and glutamate 170.

Belongs to the glutaminase PdxT/SNO family. In terms of assembly, in the presence of PdxS, forms a dodecamer of heterodimers. Only shows activity in the heterodimer.

It carries out the reaction aldehydo-D-ribose 5-phosphate + D-glyceraldehyde 3-phosphate + L-glutamine = pyridoxal 5'-phosphate + L-glutamate + phosphate + 3 H2O + H(+). It catalyses the reaction L-glutamine + H2O = L-glutamate + NH4(+). Its pathway is cofactor biosynthesis; pyridoxal 5'-phosphate biosynthesis. Functionally, catalyzes the hydrolysis of glutamine to glutamate and ammonia as part of the biosynthesis of pyridoxal 5'-phosphate. The resulting ammonia molecule is channeled to the active site of PdxS. The polypeptide is Pyridoxal 5'-phosphate synthase subunit PdxT (Methanocorpusculum labreanum (strain ATCC 43576 / DSM 4855 / Z)).